The sequence spans 342 residues: MPAAALLDDFLAFTLAGEAPAERDGACAGGAVRWQWLGDGLLAFEPAAADAAARASVLVSAGVHGDETAPIELLSMLVRDFAAGALPLACRLLVVLGNVPAMRAGERYLDDDLNRLFSGRHAQVPASREAPRAAQLEAAASAFFAAAPAGSARWHIDMHTAIRASVFEQFALLPHTGTPPTRAMVEWLGDARIAAVLLHTAKGNTYSHFTAEHCGALACTLELGKVRPFGQNDLTRFAPADRAVRKLVSGERAEGGATLPRVFTVIDQITKQSDALELFVAADVANFTAFARGTVLAQDGDYRYTVKHDEERIVFPNPTVKPGLRAGLLVVDTTRDTLAALV.

His-64, Glu-67, and His-159 together coordinate Zn(2+). Glu-222 is a catalytic residue.

The protein belongs to the AspA/AstE family. Succinylglutamate desuccinylase subfamily. Requires Zn(2+) as cofactor.

The catalysed reaction is N-succinyl-L-glutamate + H2O = L-glutamate + succinate. Its pathway is amino-acid degradation; L-arginine degradation via AST pathway; L-glutamate and succinate from L-arginine: step 5/5. Its function is as follows. Transforms N(2)-succinylglutamate into succinate and glutamate. The sequence is that of Succinylglutamate desuccinylase from Burkholderia orbicola (strain MC0-3).